Reading from the N-terminus, the 128-residue chain is Small ribosomal subunit protein eS8 (128 aa).

It belongs to the eukaryotic ribosomal protein eS8 family. Part of the 30S ribosomal subunit.

This is Small ribosomal subunit protein eS8 from Methanococcus maripaludis (strain DSM 14266 / JCM 13030 / NBRC 101832 / S2 / LL).